A 280-amino-acid polypeptide reads, in one-letter code: MLWLLVLTAPWLGGSVPISPDPGLRHEQVGIVGGCKVPARRYPWQVSLRFHGMGSGQWQHICGGSLIHPQWVLTAAHCVELEGLEAATLRVQVGQLRLYDHDQLCNVTEIIRHPNFNMSWYGWDSADIALLKLEAPLTLSEDVNLVSLPSPSLIVPPGMLCWVTGWGDIADHTPLPPPYHLQEVEVPIVGNRECNCHYQTILEQDDEVIKQDMLCAGSEGHDSCQMDSGGPLVCRWKCTWIQVGVVSWGYGCGYNLPGVYARVTSYVSWIHQHIPLSPGP.

Positions 1–15 are cleaved as a signal peptide; it reads MLWLLVLTAPWLGGS. A propeptide spanning residues 16–30 is cleaved from the precursor; that stretch reads VPISPDPGLRHEQVG. One can recognise a Peptidase S1 domain in the interval 31–275; it reads IVGGCKVPAR…YVSWIHQHIP (245 aa). Cys62 and Cys78 form a disulfide bridge. The active-site Charge relay system is the His77. Asn106 and Asn117 each carry an N-linked (GlcNAc...) asparagine glycan. Asp127 acts as the Charge relay system in catalysis. Intrachain disulfides connect Cys161–Cys234, Cys194–Cys215, and Cys224–Cys252. The Charge relay system role is filled by Ser228.

Belongs to the peptidase S1 family. Oligomer; disulfide-linked. Post-translationally, N-glycosylated. As to expression, mononuclear cells within skin, intestine, trachea and lung parenchyma, and polymorphonuclear leukocytes within capillaries and blood.

The protein localises to the cytoplasm. With respect to regulation, inhibited by leupeptin and bis(5-amidino-2-benzimidazolyl)methane (BABIM). Trypsin-like serine protease. Has a preference for extended substrates with basic residues at the P1 position; Arg is preferred over Lys. Active towards calcitonin gene-related peptide and gelatin. Not active towards substance P, vasoactive intestinal peptide, type I collagen or azocasein. This Canis lupus familiaris (Dog) protein is Mastin.